The primary structure comprises 372 residues: Queuine tRNA-ribosyltransferase (372 aa).

The Proton acceptor role is filled by Asp-92. Residues 92–96 (DSGGF), Asp-146, Gln-188, and Gly-215 contribute to the substrate site. The interval 246-252 (GIGTLRE) is RNA binding. The Nucleophile role is filled by Asp-265. An RNA binding; important for wobble base 34 recognition region spans residues 270–274 (TRLGR). Cys-303, Cys-305, Cys-308, and His-334 together coordinate Zn(2+).

The protein belongs to the queuine tRNA-ribosyltransferase family. In terms of assembly, homodimer. Within each dimer, one monomer is responsible for RNA recognition and catalysis, while the other monomer binds to the replacement base PreQ1. Zn(2+) serves as cofactor.

The enzyme catalyses 7-aminomethyl-7-carbaguanine + guanosine(34) in tRNA = 7-aminomethyl-7-carbaguanosine(34) in tRNA + guanine. The protein operates within tRNA modification; tRNA-queuosine biosynthesis. Functionally, catalyzes the base-exchange of a guanine (G) residue with the queuine precursor 7-aminomethyl-7-deazaguanine (PreQ1) at position 34 (anticodon wobble position) in tRNAs with GU(N) anticodons (tRNA-Asp, -Asn, -His and -Tyr). Catalysis occurs through a double-displacement mechanism. The nucleophile active site attacks the C1' of nucleotide 34 to detach the guanine base from the RNA, forming a covalent enzyme-RNA intermediate. The proton acceptor active site deprotonates the incoming PreQ1, allowing a nucleophilic attack on the C1' of the ribose to form the product. After dissociation, two additional enzymatic reactions on the tRNA convert PreQ1 to queuine (Q), resulting in the hypermodified nucleoside queuosine (7-(((4,5-cis-dihydroxy-2-cyclopenten-1-yl)amino)methyl)-7-deazaguanosine). The sequence is that of Queuine tRNA-ribosyltransferase from Synechococcus sp. (strain CC9902).